The following is a 198-amino-acid chain: Ribonuclease 3-like protein 1 (198 aa).

The segment covering 85–110 (KKLAPKPDEEHTTTTKPISKDDESKT) has biased composition (basic and acidic residues). Residues 85–115 (KKLAPKPDEEHTTTTKPISKDDESKTRRGSA) form a disordered region. The 78-residue stretch at 114–191 (SAKSVLHEMC…AEGALWYLEH (78 aa)) folds into the DRBM domain.

In Arabidopsis thaliana (Mouse-ear cress), this protein is Ribonuclease 3-like protein 1 (RTL1).